The following is a 509-amino-acid chain: ATP synthase subunit alpha (509 aa).

169–176 (GDRQTGKT) is a binding site for ATP.

The protein belongs to the ATPase alpha/beta chains family. As to quaternary structure, F-type ATPases have 2 components, CF(1) - the catalytic core - and CF(0) - the membrane proton channel. CF(1) has five subunits: alpha(3), beta(3), gamma(1), delta(1), epsilon(1). CF(0) has four main subunits: a(1), b(1), b'(1) and c(9-12).

Its subcellular location is the cell inner membrane. It catalyses the reaction ATP + H2O + 4 H(+)(in) = ADP + phosphate + 5 H(+)(out). Produces ATP from ADP in the presence of a proton gradient across the membrane. The alpha chain is a regulatory subunit. In Erythrobacter litoralis (strain HTCC2594), this protein is ATP synthase subunit alpha.